The chain runs to 505 residues: MSEQNAQGADEVVDLNNEMKARREKLAALREQGIPFPNDFRRDRTSDQLHAEFDAKEAEELEALNIEVSVAGRMMTRRIMGKASFVTLQDVGGRIQLYVARDDLPEGVYNEQFKKWDLGDILGAKGKLFKTKTGELSIHCTELRLLTKALRPLPDKFHGLQDQEARYRQRYLDLISNDESRNTFKTRSKILAGIRQFMVARGFMEVETPMMQVIPGGASARPFITHHNALDLDMYLRIAPELYLKRLVVGGFERVFEINRNFRNEGISVRHNPEFTMMELYMAYADYKDLIELTESLFRTLAQDVLGTTQVPYGDEVFDFGKPFEKLTMREAIKKYRPETDMADLGNFDSAKAVAESIGIHVEKSWGLGRIVTEIFDEVAEAHLIQPTFITEYPAEVSPLARRNDVNPEITDRFEFFIGGREIGNGFSELNDAEDQAQRFLDQVNAKAAGDDEAMFYDEDYVTALEHGLPPTAGLGIGIDRMVMLFTNSHTIRDVILFPAMRPVK.

Residues E415 and E422 each contribute to the Mg(2+) site.

It belongs to the class-II aminoacyl-tRNA synthetase family. In terms of assembly, homodimer. Requires Mg(2+) as cofactor.

It localises to the cytoplasm. The catalysed reaction is tRNA(Lys) + L-lysine + ATP = L-lysyl-tRNA(Lys) + AMP + diphosphate. This is Lysine--tRNA ligase from Salmonella paratyphi C (strain RKS4594).